Consider the following 374-residue polypeptide: tRNA (guanine(26)-N(2))-dimethyltransferase (374 aa).

The 365-residue stretch at 4–368 folds into the Trm1 methyltransferase domain; sequence IEATEGTTTF…APLPVLYDAI (365 aa). Arginine 41, arginine 66, aspartate 82, aspartate 108, and alanine 109 together coordinate S-adenosyl-L-methionine. Positions 237, 240, 256, and 259 each coordinate Zn(2+).

The protein belongs to the class I-like SAM-binding methyltransferase superfamily. Trm1 family.

It catalyses the reaction guanosine(26) in tRNA + 2 S-adenosyl-L-methionine = N(2)-dimethylguanosine(26) in tRNA + 2 S-adenosyl-L-homocysteine + 2 H(+). In terms of biological role, dimethylates a single guanine residue at position 26 of a number of tRNAs using S-adenosyl-L-methionine as donor of the methyl groups. This is tRNA (guanine(26)-N(2))-dimethyltransferase from Methanoregula boonei (strain DSM 21154 / JCM 14090 / 6A8).